The primary structure comprises 579 residues: Kelch repeat and BTB domain-containing protein F47D12.7 (579 aa).

In terms of domain architecture, BTB spans 51-119 (PTVTLVLRNN…PKAFEQGIKP (69 aa)). 6 Kelch repeats span residues 266–316 (AIVC…VVED), 317–363 (KLIV…RVND), 369–415 (LVFA…TIDN), 417–463 (IVAI…SIMN), 465–511 (VCMI…QMDT), and 513–559 (YVYV…TLSD).

In Caenorhabditis elegans, this protein is Kelch repeat and BTB domain-containing protein F47D12.7.